The sequence spans 1185 residues: Chromosome partition protein Smc (1185 aa).

34–41 contributes to the ATP binding site; it reads PNGSGKSN. 2 coiled-coil regions span residues 174 to 376 and 412 to 526; these read WRRS…EKDI and ENIV…KLDV. The region spanning 534-644 is the SMC hinge domain; that stretch reads VGEIISLQKK…CENIDNAFEI (111 aa). Residues 679-1039 adopt a coiled-coil conformation; sequence NIIGRKREIE…IDAMTEKMKG (361 aa).

This sequence belongs to the SMC family. In terms of assembly, homodimer.

It localises to the cytoplasm. Required for chromosome condensation and partitioning. This Clostridium kluyveri (strain NBRC 12016) protein is Chromosome partition protein Smc.